The following is a 72-amino-acid chain: DNA-directed RNA polymerase subunit epsilon (72 aa).

This sequence belongs to the RNA polymerase subunit epsilon family. RNAP is composed of a core of 2 alpha, a beta and a beta' subunit. The core is associated with a delta subunit, and at least one of epsilon or omega. When a sigma factor is associated with the core the holoenzyme is formed, which can initiate transcription.

The catalysed reaction is RNA(n) + a ribonucleoside 5'-triphosphate = RNA(n+1) + diphosphate. Its function is as follows. A non-essential component of RNA polymerase (RNAP). This Staphylococcus haemolyticus (strain JCSC1435) protein is DNA-directed RNA polymerase subunit epsilon.